The primary structure comprises 193 residues: MTVRPIVIHGDPVLHNPTREVTEPISELQELIADMYETMEVANGVGLAANQIGVSKRIFVFNCPDDEGTMHRGCFINPVLETSEIPETMPADDGSDEEGCLSVPGEGFPTGRADWAKVTGLNEDGEEWSMEGTGFLARCFQHEVGHLDGVVYTDTLIGRWKRLAKKTIKANGWTEPGLTWTPGVDEDPFGHDV.

Positions 100 and 142 each coordinate Fe cation. The active site involves E143. H146 contacts Fe cation.

It belongs to the polypeptide deformylase family. Fe(2+) is required as a cofactor.

The enzyme catalyses N-terminal N-formyl-L-methionyl-[peptide] + H2O = N-terminal L-methionyl-[peptide] + formate. Removes the formyl group from the N-terminal Met of newly synthesized proteins. Requires at least a dipeptide for an efficient rate of reaction. N-terminal L-methionine is a prerequisite for activity but the enzyme has broad specificity at other positions. This chain is Peptide deformylase 2, found in Corynebacterium efficiens (strain DSM 44549 / YS-314 / AJ 12310 / JCM 11189 / NBRC 100395).